A 563-amino-acid polypeptide reads, in one-letter code: Rhotekin (563 aa).

At Arg14 the chain carries Omega-N-methylarginine. The REM-1 domain maps to 17 to 98 (ALEMEFKRGR…LQRRKEAQVL (82 aa)). Phosphoserine occurs at positions 30 and 106. A disordered region spans residues 96–116 (QVLGKTSRRPSDSGPPAERSP). Residue Arg230 is modified to Asymmetric dimethylarginine. Ser232 carries the phosphoserine modification. The region spanning 309 to 416 (QPTASGTLRV…WMEALWQLFF (108 aa)) is the PH domain. A disordered region spans residues 518-563 (TFSLDAVPPDHSPRARSVAPLPPQRSPRTRGLCSKGQPRTWLQSPV). Ser520, Ser529, and Ser543 each carry phosphoserine.

In terms of assembly, interacts via its C-terminal region with the TAX1BP3 PDZ domain. This interaction facilitates Rho-mediated activation of the c-Fos serum response element (SRE). Interacts with SEPT9. Specifically binds to GTP-bound RHOA, RHOB and RHOC and inhibits their GTPase activity. As to expression, highly expressed in prostate, moderately in kidney, heart, brain, spleen, testis, placenta, small intestine, pancreas, skeletal muscle and peripheral blood leukocytes, and weakly in ovary, colon and thymus. Weakly expressed in all normal cell lines tested. Overexpressed in various cancer cell lines.

Mediates Rho signaling to activate NF-kappa-B and may confer increased resistance to apoptosis to cells in gastric tumorigenesis. May play a novel role in the organization of septin structures. The protein is Rhotekin of Homo sapiens (Human).